The primary structure comprises 549 residues: MKRVLTALAAALPFAAHAADAISGAVERQPTNWQAIIMFLIFVVFTLGITYWASKRVRSRSDYYTAGGNITGFQNGLAIAGDYMSAASFLGISALVFTSGYDGLIYSLGFLVGWPIILFLIAERLRNLGRYTFADVASYRLKQGPIRILSACGSLVVVALYLIAQMVGAGKLIELLFGLNYHIAVVLVGVLMMMYVLFGGMLATTWVQIIKAVLLLFGASFMAFMVMKHVGFSFNNLFTEAMAVHPKGTAIMSPGGLVQDPISALSLGLGLMFGTAGLPHILMRFFTVSDAREARKSVFYATGFMGYFYILTFIIGFGAIMLVGTNPAYKDAAGALIGGNNMAAVHLANAVGGNLFLGFISAVAFATILAVVAGLTLAGASAVSHDLYANVFRKGATEREELKVSKITVLVLGVIAIILGVLFENQNIAFMVGLAFAIAASCNFPIILLSMYWSKLTTRGAMLGGWLGLLTAVVLMILGPTIWVQILGHEKAIFPYEYPALFSISVAFLGIWFFSATDNSAEGNREREQFRAQFIRSQTGFGVEQGRAH.

A run of 13 helical transmembrane segments spans residues W33–A53, L77–F97, G103–E123, I148–G168, I183–A203, W206–V226, I262–L282, G303–V323, L355–L375, V404–E424, I428–L448, G464–V484, and I493–F513.

Belongs to the sodium:solute symporter (SSF) (TC 2.A.21) family.

Its subcellular location is the cell inner membrane. In terms of biological role, transports acetate. The polypeptide is Cation/acetate symporter ActP (Salmonella gallinarum (strain 287/91 / NCTC 13346)).